We begin with the raw amino-acid sequence, 1428 residues long: DNA-directed RNA polymerase subunit beta' (1428 aa).

The Zn(2+) site is built by Cys66, Cys68, Cys81, and Cys84. Residues Asp472, Asp474, and Asp476 each coordinate Mg(2+). Positions 816, 890, 897, and 900 each coordinate Zn(2+).

This sequence belongs to the RNA polymerase beta' chain family. In terms of assembly, the RNAP catalytic core consists of 2 alpha, 1 beta, 1 beta' and 1 omega subunit. When a sigma factor is associated with the core the holoenzyme is formed, which can initiate transcription. Requires Mg(2+) as cofactor. Zn(2+) serves as cofactor.

It catalyses the reaction RNA(n) + a ribonucleoside 5'-triphosphate = RNA(n+1) + diphosphate. Functionally, DNA-dependent RNA polymerase catalyzes the transcription of DNA into RNA using the four ribonucleoside triphosphates as substrates. In Phocaeicola vulgatus (strain ATCC 8482 / DSM 1447 / JCM 5826 / CCUG 4940 / NBRC 14291 / NCTC 11154) (Bacteroides vulgatus), this protein is DNA-directed RNA polymerase subunit beta'.